The primary structure comprises 208 residues: Molybdenum cofactor guanylyltransferase (208 aa).

GTP contacts are provided by residues 10-12 (LAG), K23, D69, and D103. D103 is a binding site for Mg(2+).

This sequence belongs to the MobA family. As to quaternary structure, monomer. Requires Mg(2+) as cofactor.

It is found in the cytoplasm. The enzyme catalyses Mo-molybdopterin + GTP + H(+) = Mo-molybdopterin guanine dinucleotide + diphosphate. Its function is as follows. Transfers a GMP moiety from GTP to Mo-molybdopterin (Mo-MPT) cofactor (Moco or molybdenum cofactor) to form Mo-molybdopterin guanine dinucleotide (Mo-MGD) cofactor. The polypeptide is Molybdenum cofactor guanylyltransferase (Mesorhizobium japonicum (strain LMG 29417 / CECT 9101 / MAFF 303099) (Mesorhizobium loti (strain MAFF 303099))).